We begin with the raw amino-acid sequence, 544 residues long: Chaperonin GroEL (544 aa).

ATP is bound by residues 30-33 (TLGP), K51, 87-91 (DGTTT), G415, and D496.

This sequence belongs to the chaperonin (HSP60) family. Forms a cylinder of 14 subunits composed of two heptameric rings stacked back-to-back. Interacts with the co-chaperonin GroES.

The protein localises to the cytoplasm. It carries out the reaction ATP + H2O + a folded polypeptide = ADP + phosphate + an unfolded polypeptide.. In terms of biological role, together with its co-chaperonin GroES, plays an essential role in assisting protein folding. The GroEL-GroES system forms a nano-cage that allows encapsulation of the non-native substrate proteins and provides a physical environment optimized to promote and accelerate protein folding. The sequence is that of Chaperonin GroEL from Granulibacter bethesdensis (strain ATCC BAA-1260 / CGDNIH1).